A 66-amino-acid polypeptide reads, in one-letter code: Large ribosomal subunit protein uL29 (66 aa).

It belongs to the universal ribosomal protein uL29 family.

This Borrelia garinii subsp. bavariensis (strain ATCC BAA-2496 / DSM 23469 / PBi) (Borreliella bavariensis) protein is Large ribosomal subunit protein uL29.